The chain runs to 1166 residues: Poly [ADP-ribose] polymerase tankyrase-2 (1166 aa).

ANK repeat units follow at residues 23–52 (PSAR…VNSR), 57–86 (RKST…NVQA), 90–119 (GGLI…DPNA), and 123–152 (WNYT…EPTI). At Asn203 the chain carries (3S)-3-hydroxyasparagine; by HIF1AN. ANK repeat units lie at residues 210–239 (RKST…DVHA), 243–272 (GDLV…CVNA), 276–305 (WQFT…DPTL), 363–395 (THET…NTNE), 399–428 (EFLT…KVNA), 432–461 (LGQT…DPNI), and 463–489 (SLQG…SLGH). (3S)-3-hydroxyhistidine; by HIF1AN is present on His238. A (3S)-3-hydroxyasparagine; by HIF1AN modification is found at Asn271. Asn427 bears the (3S)-3-hydroxyasparagine; by HIF1AN mark. Residue Asn518 is modified to (3S)-3-hydroxyasparagine; by HIF1AN. 4 ANK repeats span residues 525–554 (RQST…DVHA), 558–587 (GGLV…VVNV), 591–620 (WKFT…DPTK), and 624–652 (DGNT…LLDA). Residues 545-553 (LLQHGADVH) form an HIF1AN-binding region. His553 is modified ((3S)-3-hydroxyhistidine; by HIF1AN). Asn586 carries the (3S)-3-hydroxyasparagine; by HIF1AN modification. 3 positions are modified to (3S)-3-hydroxyasparagine; by HIF1AN: Asn671, Asn706, and Asn739. ANK repeat units lie at residues 678-707 (RHST…DVNA), 711-740 (GGLI…CVNA), and 744-773 (WAFT…DPTL). The 64-residue stretch at 873-936 (GIDFSITQFI…IKGVERLISG (64 aa)) folds into the SAM domain. Residues 959–1164 (SPDDKEFQSV…YQIVRPEGMV (206 aa)) form the PARP catalytic domain. Positions 1081, 1084, 1089, and 1092 each coordinate Zn(2+).

Belongs to the ARTD/PARP family. As to quaternary structure, oligomerizes and associates with TNKS. Interacts with the cytoplasmic domain of LNPEP/Otase in SLC2A4/GLUT4-vesicles. Binds to the N-terminus of Grb14 and TRF1 with its ankyrin repeat region. Interacts with HIF1AN. Interacts with RNF146; this interaction leads to ubiquitination and proteasomal degradation. Interacts with NUMA1. In terms of processing, ubiquitinated by RNF146 when auto-poly-ADP-ribosylated, leading to its degradation. Deubiquitinated by USP25; leading to stabilization. Post-translationally, ADP-ribosylated (-auto). Poly-ADP-ribosylated protein is recognized by RNF146, followed by ubiquitination.

It localises to the cytoplasm. The protein resides in the golgi apparatus membrane. It is found in the nucleus. The protein localises to the chromosome. Its subcellular location is the telomere. The enzyme catalyses NAD(+) + (ADP-D-ribosyl)n-acceptor = nicotinamide + (ADP-D-ribosyl)n+1-acceptor + H(+).. It catalyses the reaction L-aspartyl-[protein] + NAD(+) = 4-O-(ADP-D-ribosyl)-L-aspartyl-[protein] + nicotinamide. The catalysed reaction is L-glutamyl-[protein] + NAD(+) = 5-O-(ADP-D-ribosyl)-L-glutamyl-[protein] + nicotinamide. Poly-ADP-ribosyltransferase involved in various processes such as Wnt signaling pathway, telomere length and vesicle trafficking. Acts as an activator of the Wnt signaling pathway by mediating poly-ADP-ribosylation of AXIN1 and AXIN2, 2 key components of the beta-catenin destruction complex: poly-ADP-ribosylated target proteins are recognized by RNF146, which mediates their ubiquitination and subsequent degradation. Also mediates poly-ADP-ribosylation of BLZF1 and CASC3, followed by recruitment of RNF146 and subsequent ubiquitination. Mediates poly-ADP-ribosylation of TERF1, thereby contributing to the regulation of telomere length. Stimulates 26S proteasome activity. This Mus musculus (Mouse) protein is Poly [ADP-ribose] polymerase tankyrase-2.